The sequence spans 536 residues: Heparanase-like protein 3 (536 aa).

The first 24 residues, 1 to 24, serve as a signal peptide directing secretion; sequence MAYRQILAIVLFLCVFQFLDCTVS. N-linked (GlcNAc...) asparagine glycans are attached at residues Asn30, Asn122, Asn176, and Asn191. Glu202 functions as the Proton donor in the catalytic mechanism. Asn265 and Asn308 each carry an N-linked (GlcNAc...) asparagine glycan. Glu319 (nucleophile) is an active-site residue. 4 N-linked (GlcNAc...) asparagine glycosylation sites follow: Asn370, Asn427, Asn438, and Asn510.

Belongs to the glycosyl hydrolase 79 family.

It is found in the lysosome membrane. The protein resides in the secreted. Functionally, endoglycosidase which is a cell surface and extracellular matrix-degrading enzyme. Cleaves heparan sulfate proteoglycans (HSPGs) into heparan sulfate side chains and core proteoglycans. The polypeptide is Heparanase-like protein 3 (Arabidopsis thaliana (Mouse-ear cress)).